A 508-amino-acid chain; its full sequence is Photosystem II CP47 reaction center protein (508 aa).

The next 6 helical transmembrane spans lie at 21–36 (AVHI…WAGS), 101–115 (IVFS…IWHW), 140–156 (GIHL…FGAF), 203–218 (IAAG…FHLS), 237–252 (VLSS…AFIV), and 457–472 (TFAL…HGAR).

This sequence belongs to the PsbB/PsbC family. PsbB subfamily. In terms of assembly, PSII is composed of 1 copy each of membrane proteins PsbA, PsbB, PsbC, PsbD, PsbE, PsbF, PsbH, PsbI, PsbJ, PsbK, PsbL, PsbM, PsbT, PsbX, PsbY, PsbZ, Psb30/Ycf12, at least 3 peripheral proteins of the oxygen-evolving complex and a large number of cofactors. It forms dimeric complexes. Binds multiple chlorophylls. PSII binds additional chlorophylls, carotenoids and specific lipids. is required as a cofactor.

It localises to the plastid. Its subcellular location is the chloroplast thylakoid membrane. In terms of biological role, one of the components of the core complex of photosystem II (PSII). It binds chlorophyll and helps catalyze the primary light-induced photochemical processes of PSII. PSII is a light-driven water:plastoquinone oxidoreductase, using light energy to abstract electrons from H(2)O, generating O(2) and a proton gradient subsequently used for ATP formation. The sequence is that of Photosystem II CP47 reaction center protein from Gnetum parvifolium (Small-leaved jointfir).